A 193-amino-acid polypeptide reads, in one-letter code: Putative F-box protein At1g31072 (193 aa).

In terms of domain architecture, F-box spans 4–53; it reads EKTLDSIPIDVFLDIFSRLPAKSVGRSCCVSNRWASILGSQDFKELFLTM.

This chain is Putative F-box protein At1g31072, found in Arabidopsis thaliana (Mouse-ear cress).